A 164-amino-acid polypeptide reads, in one-letter code: Lipoprotein signal peptidase (164 aa).

Transmembrane regions (helical) follow at residues 12 to 32 (WLWLVVVVLIIDLGSKYLILQ), 70 to 90 (WFFAGIAIGISVILAVMMYRS), and 102 to 122 (ALIIGGALGNLFDRLWHGFVV). Catalysis depends on residues Asp-123 and Asp-141. The helical transmembrane segment at 137-157 (FNLADTAICVGAALIVLEGFL) threads the bilayer.

Belongs to the peptidase A8 family.

The protein localises to the cell inner membrane. The enzyme catalyses Release of signal peptides from bacterial membrane prolipoproteins. Hydrolyzes -Xaa-Yaa-Zaa-|-(S,diacylglyceryl)Cys-, in which Xaa is hydrophobic (preferably Leu), and Yaa (Ala or Ser) and Zaa (Gly or Ala) have small, neutral side chains.. It functions in the pathway protein modification; lipoprotein biosynthesis (signal peptide cleavage). In terms of biological role, this protein specifically catalyzes the removal of signal peptides from prolipoproteins. The polypeptide is Lipoprotein signal peptidase (Shigella sonnei (strain Ss046)).